The following is a 500-amino-acid chain: MKAFKQKQVWFITGSQDLYGPKVLEQVAKNSEQIVHGFNESSAISIEVVYKPTVKSPREIHAVCQAANSDENCVGVILWMHTFSPAKMWIAGLNELSKPFMHLHTQFNAELPWSEINMNYMNTHQSAHGCREFGFIGTRMRKERKVVVGHWQSSDVQAQIDDWCRAAAGWHESQNLRIARFGDNMRQVAVTEGDKVAAQIQFGYEVHAYSLGELNEAIADIAEGDVTAQLDRYASEYQVGNELFGDEYQLDRLRKEAKIELGLTQFLTQGGFGAFTNCFENLTGMTGLPGLATQRLMANGFGYGGEGDWKTAAMVRIMKVMGQGRAGGTSFMEDYTYNFGATDQVLGAHMLEVCPSIAAAKPRLEVHRHTIGVRCDVPRLLFTGKAGPAINVSTIDLGNRFRIILNELDTVTPPQDLPNLPVASALWEPRPNLAVAAAAWIHAGGAHHSAYSQAITTDQIVDFAEMAGAELVIIDADTKIREFKNELRQNSVYYGLARGL.

Residues glutamate 306, glutamate 333, histidine 349, and histidine 448 each contribute to the Mn(2+) site.

It belongs to the arabinose isomerase family. Mn(2+) is required as a cofactor.

The enzyme catalyses beta-L-arabinopyranose = L-ribulose. It participates in carbohydrate degradation; L-arabinose degradation via L-ribulose; D-xylulose 5-phosphate from L-arabinose (bacterial route): step 1/3. Its function is as follows. Catalyzes the conversion of L-arabinose to L-ribulose. The sequence is that of L-arabinose isomerase from Shewanella sp. (strain ANA-3).